The chain runs to 560 residues: Vanillyl-alcohol oxidase (560 aa).

One can recognise an FAD-binding PCMH-type domain in the interval 67 to 272 (DYFLASAIVA…TKIGIWLMPN (206 aa)). Residue Tyr-108 is part of the active site. His-422 is subject to Tele-8alpha-FAD histidine. Active-site residues include Tyr-503 and Arg-504.

The protein to bacterial flavocytochrome p-cresol methyl hydroxylase. Homooctamer (tetramer of tightly interacting dimers). It depends on FAD as a cofactor.

The protein localises to the peroxisome. It is found in the cytoplasm. The enzyme catalyses 4-hydroxy-3-methoxy-benzenemethanol + O2 = vanillin + H2O2. With respect to regulation, competitively inhibited by cinnamyl and coniferyl alcohols and by isoeugenol. Functionally, catalyzes the conversion of vanillin alcohol to vanillin, and also the conversion of a wide range of phenolic compounds bearing side chains of variable size at the para position of the aromatic ring. Crucial for the degradation of the secondary metabolites derived from the degradation of the lignin. Catalyzes besides the oxidation of 4-hydroxybenzyl alcohols, the oxidative deamination of 4-hydroxybenzylamines, the oxidative demethylation of 4-(methoxy-methyl)phenols and the oxidative hydration of 4-allylphenols. Most active with 4-allylphenols. This Penicillium simplicissimum protein is Vanillyl-alcohol oxidase (VAOA).